Consider the following 333-residue polypeptide: Electron transfer flavoprotein subunit alpha, mitochondrial (333 aa).

The N-terminal 19 residues, 1 to 19 (MFRAAAPGQLRRATSLLRF), are a transit peptide targeting the mitochondrion. Residues 20 to 204 (QSTLVIAEHA…GISEWLDQKL (185 aa)) form a domain I region. Position 59 is an N6-acetyllysine; alternate (Lys-59). Lys-59 is subject to N6-succinyllysine; alternate. Position 62 is an N6-acetyllysine (Lys-62). Residue Lys-69 is modified to N6-acetyllysine; alternate. N6-succinyllysine; alternate is present on Lys-69. Position 75 is an N6-acetyllysine (Lys-75). Position 85 is an N6-acetyllysine; alternate (Lys-85). At Lys-85 the chain carries N6-succinyllysine; alternate. Phosphothreonine is present on Thr-93. N6-acetyllysine occurs at positions 101 and 139. At Ser-140 the chain carries Phosphoserine. Lys-158 is modified (N6-acetyllysine; alternate). Residue Lys-158 is modified to N6-succinyllysine; alternate. Lys-164 carries the N6-acetyllysine modification. Lys-187 carries the N6-succinyllysine modification. Residue Lys-203 is modified to N6-acetyllysine; alternate. N6-succinyllysine; alternate is present on Lys-203. The tract at residues 205–333 (TKSDRPELTG…PEMTELLKKK (129 aa)) is domain II. N6-succinyllysine is present on Lys-216. Residue Arg-223 coordinates FAD. N6-acetyllysine; alternate occurs at positions 226 and 232. N6-succinyllysine; alternate is present on residues Lys-226 and Lys-232. FAD is bound by residues Ser-248, 263-266 (VGQT), 281-286 (SGAIQH), and Asn-300. N6-succinyllysine is present on Lys-301. FAD is bound at residue 318 to 319 (DL).

It belongs to the ETF alpha-subunit/FixB family. In terms of assembly, heterodimer composed of ETFA and ETFB. Identified in a complex that contains ETFA, ETFB and ETFRF1. Interaction with ETFRF1 promotes dissociation of the bound FAD and loss of electron transfer activity. Interacts with TASOR. Requires FAD as cofactor.

The protein resides in the mitochondrion matrix. Functionally, heterodimeric electron transfer flavoprotein that accepts electrons from several mitochondrial dehydrogenases, including acyl-CoA dehydrogenases, glutaryl-CoA and sarcosine dehydrogenase. It transfers the electrons to the main mitochondrial respiratory chain via ETF-ubiquinone oxidoreductase (ETF dehydrogenase). Required for normal mitochondrial fatty acid oxidation and normal amino acid metabolism. The sequence is that of Electron transfer flavoprotein subunit alpha, mitochondrial (ETFA) from Bos taurus (Bovine).